The sequence spans 204 residues: Somatotropin (204 aa).

Positions 1–17 (MDRVVLMLSVLSLGVSS) are cleaved as a signal peptide. A Pyrrolidone carboxylic acid modification is found at Q18. H36 is a Zn(2+) binding site. C69 and C177 form a disulfide bridge. E186 contacts Zn(2+). C194 and C202 are joined by a disulfide.

The protein belongs to the somatotropin/prolactin family.

It is found in the secreted. In terms of biological role, growth hormone plays an important role in growth control and is involved in the regulation of several anabolic processes. Implicated as an osmoregulatory substance important for seawater adaptation. The sequence is that of Somatotropin (gh) from Acanthopagrus latus (Yellowfin seabream).